Consider the following 371-residue polypeptide: tRNA-specific 2-thiouridylase MnmA (371 aa).

Residues 24–31 and Leu50 contribute to the ATP site; that span reads AMSGGVDS. Catalysis depends on Cys119, which acts as the Nucleophile. Cys119 and Cys215 form a disulfide bridge. Gly143 is a binding site for ATP. The segment at 165–167 is interaction with tRNA; the sequence is KDQ. Cys215 functions as the Cysteine persulfide intermediate in the catalytic mechanism.

It belongs to the MnmA/TRMU family.

It is found in the cytoplasm. The catalysed reaction is S-sulfanyl-L-cysteinyl-[protein] + uridine(34) in tRNA + AH2 + ATP = 2-thiouridine(34) in tRNA + L-cysteinyl-[protein] + A + AMP + diphosphate + H(+). Catalyzes the 2-thiolation of uridine at the wobble position (U34) of tRNA, leading to the formation of s(2)U34. The protein is tRNA-specific 2-thiouridylase MnmA of Neorickettsia sennetsu (strain ATCC VR-367 / Miyayama) (Ehrlichia sennetsu).